We begin with the raw amino-acid sequence, 333 residues long: MSAVSRIATLTRQSMLSALSDNNRLRLFSGSSNPSLSQEVARYLGMDIGPMLRKRFADGELYIQIQESIRGGDVYLIQPCCHPVNDNLMELLIMIDACRRASARQITAVLPYYGYARADRKTAGRESISAKLVANLITGAGAQRVLAMDLHSAQIQGYFDIPCDHMYGSPVIIDYLKSKQLTDLVVVSPDVGGVARARAFAKKLNDAPLAIIDKRRQSHNVAEVLNLIGDVDGKTAVLVDDMIDTAGTLSEGSRLLRAQGARQVYACATHAVFSEPAINRLSGGLFEEVIVTNTIPVPDDHHFPQLTILSVANLIGEAIWRIHEESSVSSMFR.

58-60 contributes to the ATP binding site; sequence DGE. Mg(2+) is bound by residues histidine 151 and aspartate 190. Residue lysine 214 is part of the active site. D-ribose 5-phosphate contacts are provided by residues arginine 216, aspartate 240, and 244 to 248; that span reads DTAGT.

Belongs to the ribose-phosphate pyrophosphokinase family. Class I subfamily. Homohexamer. The cofactor is Mg(2+).

Its subcellular location is the cytoplasm. It catalyses the reaction D-ribose 5-phosphate + ATP = 5-phospho-alpha-D-ribose 1-diphosphate + AMP + H(+). It participates in metabolic intermediate biosynthesis; 5-phospho-alpha-D-ribose 1-diphosphate biosynthesis; 5-phospho-alpha-D-ribose 1-diphosphate from D-ribose 5-phosphate (route I): step 1/1. Functionally, involved in the biosynthesis of the central metabolite phospho-alpha-D-ribosyl-1-pyrophosphate (PRPP) via the transfer of pyrophosphoryl group from ATP to 1-hydroxyl of ribose-5-phosphate (Rib-5-P). In Synechocystis sp. (strain ATCC 27184 / PCC 6803 / Kazusa), this protein is Ribose-phosphate pyrophosphokinase.